Consider the following 633-residue polypeptide: Probable potassium transport system protein Kup (633 aa).

12 helical membrane-spanning segments follow: residues Met21–Leu41, Ile61–Val81, Leu112–Pro132, Gly149–Gln169, Ile176–Val196, Phe217–Thr237, Trp258–Leu278, Leu290–Ile310, Ile348–Phe368, Ala377–Met397, Leu398–Val418, and Ile430–Thr450.

This sequence belongs to the HAK/KUP transporter (TC 2.A.72) family.

The protein resides in the cell inner membrane. It carries out the reaction K(+)(in) + H(+)(in) = K(+)(out) + H(+)(out). Its function is as follows. Transport of potassium into the cell. Likely operates as a K(+):H(+) symporter. This is Probable potassium transport system protein Kup from Pseudomonas fluorescens (strain Pf0-1).